The chain runs to 290 residues: Light-independent protochlorophyllide reductase iron-sulfur ATP-binding protein (290 aa).

ATP-binding positions include 10-15 and Lys-39; that span reads GIGKST. Mg(2+) is bound at residue Ser-14. [4Fe-4S] cluster-binding residues include Cys-95 and Cys-129. Position 180–181 (180–181) interacts with ATP; the sequence is NR.

The protein belongs to the NifH/BchL/ChlL family. As to quaternary structure, homodimer. Protochlorophyllide reductase is composed of three subunits; ChlL, ChlN and ChlB. Requires [4Fe-4S] cluster as cofactor.

It is found in the plastid. The protein resides in the chloroplast. It catalyses the reaction chlorophyllide a + oxidized 2[4Fe-4S]-[ferredoxin] + 2 ADP + 2 phosphate = protochlorophyllide a + reduced 2[4Fe-4S]-[ferredoxin] + 2 ATP + 2 H2O. It functions in the pathway porphyrin-containing compound metabolism; chlorophyll biosynthesis (light-independent). Component of the dark-operative protochlorophyllide reductase (DPOR) that uses Mg-ATP and reduced ferredoxin to reduce ring D of protochlorophyllide (Pchlide) to form chlorophyllide a (Chlide). This reaction is light-independent. The L component serves as a unique electron donor to the NB-component of the complex, and binds Mg-ATP. This Angiopteris evecta (Mule's foot fern) protein is Light-independent protochlorophyllide reductase iron-sulfur ATP-binding protein.